Reading from the N-terminus, the 511-residue chain is 2'-acyl-2-O-sulfo-trehalose (hydroxy)phthioceranyltransferase PapA1 (511 aa).

This sequence belongs to the PapA acyltransferase family.

The catalysed reaction is a (hydroxy)phthioceranyl-[(hydroxy)phthioceranic acid synthase] + 2'-palmitoyl/stearoyl-2-O-sulfo-alpha,alpha-trehalose = a 3'-(hydroxy)phthioceranyl-2'-palmitoyl/stearoyl-2-O-sulfo-alpha,alpha-trehalose + holo-[(hydroxy)phthioceranic acid synthase].. Catalyzes the acylation of trehalose-2-sulfate-2'-palmitate (SL659) by adding the (hydroxy)phthioceranoyl group at the 3'-position to yield the diacylated intermediate 2-palmitoyl-3-(C43)-phthioceranyl-alpha, alpha'-D-trehalose-2'-sulfate (SL1278). This Mycobacterium bovis (strain BCG / Pasteur 1173P2) protein is 2'-acyl-2-O-sulfo-trehalose (hydroxy)phthioceranyltransferase PapA1 (papA1).